Here is a 251-residue protein sequence, read N- to C-terminus: V-set and transmembrane domain-containing protein 2B (251 aa).

The signal sequence occupies residues 1–25; the sequence is MEKQGLFSALCYLMLNTPLLFSVNA. An Ig-like V-type domain is found at 26 to 142; the sequence is TFTEVPKDVT…DETQEHKAQA (117 aa). Residues 26–226 lie on the Extracellular side of the membrane; that stretch reads TFTEVPKDVT…RQQHGSGTGP (201 aa). The cysteines at positions 46 and 125 are disulfide-linked. Residues 157 to 213 form a disordered region; the sequence is AAEAVSHIQSSGPRRNNPSSRATPEPGNKRAVPPAENLAPSLSTAASSSASPAPGKA. Low complexity-rich tracts occupy residues 166-177 and 195-213; these read SSGPRRNNPSSR and APSL…PGKA. A helical membrane pass occupies residues 227 to 247; the sequence is IFANDPALYMFLLIFHQLVYL. Residues 248 to 251 are Cytoplasmic-facing; sequence LLNH.

It localises to the membrane. This chain is V-set and transmembrane domain-containing protein 2B (vstm2b), found in Xenopus tropicalis (Western clawed frog).